Reading from the N-terminus, the 829-residue chain is Transmembrane protease serine 7 (829 aa).

The Cytoplasmic portion of the chain corresponds to 1-62; the sequence is MDKEKSDPSC…RAPFWNVQNK (62 aa). Residues 26-52 are disordered; the sequence is SVPGKLPGRRPPRKPIGKPRPRKQPKK. Residues 32 to 52 are compositionally biased toward basic residues; that stretch reads PGRRPPRKPIGKPRPRKQPKK. Residues 63-83 form a helical; Signal-anchor for type II membrane protein membrane-spanning segment; sequence IILFTVFLFILAVTAWTLLWL. Residues 84–829 lie on the Extracellular side of the membrane; sequence YISKTESKDA…WIHKYVPSLL (746 aa). Residues 92–220 enclose the SEA domain; it reads DAFYFVGMFR…DSVVLNAGLR (129 aa). Disulfide bonds link cysteine 233/cysteine 259, cysteine 285/cysteine 308, and cysteine 351/cysteine 382. 2 consecutive CUB domains span residues 233-346 and 351-467; these read CSRY…FEVI and CEST…YNIS. Residues asparagine 401 and asparagine 465 are each glycosylated (N-linked (GlcNAc...) asparagine). LDL-receptor class A domains lie at 469–505, 503–540, and 544–581; these read PCPAGSFRCSSGLCVPQAQRCDGVNDCFDESDELFCV, FCVTVKPACNSSSFRQHGPLVCDGFRDCEDGQDEQNCT, and PCTSRTFKCGNDICFRKQNAQCDGIVDCPDGSDEEGCG. Cystine bridges form between cysteine 470–cysteine 482, cysteine 477–cysteine 495, cysteine 489–cysteine 504, cysteine 511–cysteine 530, cysteine 524–cysteine 539, cysteine 545–cysteine 557, cysteine 552–cysteine 571, cysteine 565–cysteine 580, and cysteine 617–cysteine 633. A Peptidase S1 domain is found at 592–826; it reads IVGGSDSQEG…FVPWIHKYVP (235 aa). Active-site charge relay system residues include histidine 632 and aspartate 680. Disulfide bonds link cysteine 716–cysteine 782, cysteine 748–cysteine 761, and cysteine 772–cysteine 802. Catalysis depends on serine 776, which acts as the Charge relay system.

It belongs to the peptidase S1 family. In terms of assembly, forms a heterodimer with SERPINA5. N-glycosylated. As to expression, expressed in brain, eye, testis, skin, epididymis and salivary gland with lower levels in heart, skeletal muscle, thymus, ovary, prostate and uterus.

The protein resides in the cell membrane. Serine protease which preferentially hydrolyzes peptides with Arg at the P1 position. This Mus musculus (Mouse) protein is Transmembrane protease serine 7 (Tmprss7).